The chain runs to 276 residues: METLELQGAKLRYHQVGQGPVLIFIPGANGTGDIFLPLAEQLKDHFTVVAVDRRDYGESELTEPLPDSASNPDSDYRVKRDAQDIAELAKSLSDEPVYILGSSSGSIVAMHVLKDYPEVVKKIAFHEPPINTFLPDSTYWKDKNDDIVHQILTEGLEKGMKTFGETLNIAPIDAKMMSQPADTEEGRIEQYKRTMFWSEFEIRQYTHSDITLDDFTKYSDKITLLNGTDSRGSFPQDVNFYINKETGIPIVDIPGGHLGYIQKPEGFADVLLNMWG.

One can recognise an AB hydrolase-1 domain in the interval 20-137 (PVLIFIPGAN…PPINTFLPDS (118 aa)). A disordered region spans residues 57–76 (GESELTEPLPDSASNPDSDY).

The protein belongs to the AB hydrolase superfamily.

This is an uncharacterized protein from Staphylococcus aureus (strain COL).